A 62-amino-acid chain; its full sequence is Conotoxin TxIC (62 aa).

A signal peptide spans 1-22 (MHCLPIFVILLLLTASGPSVDA). A propeptide spanning residues 23-47 (QLKTKDDVPLSSFRDHAKSTLRRLQ) is cleaved from the precursor. 2 disulfides stabilise this stretch: Cys52–Cys58 and Cys53–Cys61. Residue Pro60 is modified to 4-hydroxyproline. Cys61 carries the post-translational modification Cysteine amide.

It belongs to the conotoxin A superfamily. As to expression, expressed by the venom duct.

It localises to the secreted. This is Conotoxin TxIC from Conus textile (Cloth-of-gold cone).